Reading from the N-terminus, the 119-residue chain is Large ribosomal subunit protein bL20 (119 aa).

Belongs to the bacterial ribosomal protein bL20 family.

Binds directly to 23S ribosomal RNA and is necessary for the in vitro assembly process of the 50S ribosomal subunit. It is not involved in the protein synthesizing functions of that subunit. This chain is Large ribosomal subunit protein bL20, found in Alcanivorax borkumensis (strain ATCC 700651 / DSM 11573 / NCIMB 13689 / SK2).